A 388-amino-acid chain; its full sequence is Dual-specificity RNA methyltransferase RlmN (388 aa).

The active-site Proton acceptor is Glu109. Residues 115–354 (EDDRATLCVS…TIVRKTRGDD (240 aa)) form the Radical SAM core domain. The cysteines at positions 122 and 359 are disulfide-linked. Positions 129, 133, and 136 each coordinate [4Fe-4S] cluster. S-adenosyl-L-methionine is bound by residues 183–184 (GE), Ser215, 237–239 (SLH), and Asn316. Cys359 (S-methylcysteine intermediate) is an active-site residue.

This sequence belongs to the radical SAM superfamily. RlmN family. [4Fe-4S] cluster is required as a cofactor.

The protein localises to the cytoplasm. It catalyses the reaction adenosine(2503) in 23S rRNA + 2 reduced [2Fe-2S]-[ferredoxin] + 2 S-adenosyl-L-methionine = 2-methyladenosine(2503) in 23S rRNA + 5'-deoxyadenosine + L-methionine + 2 oxidized [2Fe-2S]-[ferredoxin] + S-adenosyl-L-homocysteine. The enzyme catalyses adenosine(37) in tRNA + 2 reduced [2Fe-2S]-[ferredoxin] + 2 S-adenosyl-L-methionine = 2-methyladenosine(37) in tRNA + 5'-deoxyadenosine + L-methionine + 2 oxidized [2Fe-2S]-[ferredoxin] + S-adenosyl-L-homocysteine. Its function is as follows. Specifically methylates position 2 of adenine 2503 in 23S rRNA and position 2 of adenine 37 in tRNAs. m2A2503 modification seems to play a crucial role in the proofreading step occurring at the peptidyl transferase center and thus would serve to optimize ribosomal fidelity. This is Dual-specificity RNA methyltransferase RlmN from Salmonella typhimurium (strain LT2 / SGSC1412 / ATCC 700720).